The primary structure comprises 274 residues: E3 ubiquitin-protein ligase complex SLX5-SLX8 subunit SLX8 (274 aa).

Disordered regions lie at residues 1–117 (MARR…GNNI) and 136–159 (ANTPSASPMLDAAPPTTKPGTNSK). Over residues 13-28 (ENLRIKRVRLESVRQN) the composition is skewed to basic and acidic residues. Ser50 carries the phosphoserine modification. Thr66 carries the phosphothreonine modification. Acidic residues predominate over residues 66–75 (TSEEDGDDDL). Phosphoserine is present on Ser67. Basic and acidic residues predominate over residues 97-108 (GNHDRETMHTEE). The RING-type zinc finger occupies 206–250 (CPICFEPPETALMTLCGHVFCCPCLFQMVNSSRTCRQFGHCALCR).

Component of the heterodimeric SUMO-targeted ubiquitin ligase (STUbL) complex composed of SLX5 and SLX8.

It localises to the nucleus. It is found in the chromosome. Its subcellular location is the centromere. The protein localises to the kinetochore. The enzyme catalyses S-ubiquitinyl-[E2 ubiquitin-conjugating enzyme]-L-cysteine + [acceptor protein]-L-lysine = [E2 ubiquitin-conjugating enzyme]-L-cysteine + N(6)-ubiquitinyl-[acceptor protein]-L-lysine.. Its pathway is protein modification; protein ubiquitination. Component of the SUMO-targeted ubiquitin ligase (STUbL) complex SLX5/SLX8 that mediates ubiquitination and subsequent desumoylation of sumoylated proteins and proteins containing SUMO-like domains for their degradation. The STUbL complex SLX5/SLX8 stimulates ubiquitin conjugating enzymes, including UBC1, UBC4, UBC5 and UBC13-MMS2, and mediates the proteolytic down-regulation of sumoylated proteins. The STUbL complex SLX5/SLX8 is involved in ubiquitin-mediated degradation of histone variant CSE4, preventing mislocalization to euchromatin. The complex plays an essential role in maintenance of chromosome stability and links SUMO-dependent ubiquitination to a centromere-specific function during mitosis. The complex is involved in proteolysis of spindle positioning protein KAR9 and ensures correct spindle function by regulating levels of microtubule-associated proteins. During replication, the complex helps to prevent DNA lesions via recombination and has a role in localizing the DNA damage protein DCD2. The complex especially ubiquitinates the nuclease YEN1 and prevents persistent accumulation of a fraction of YEN1 associated with sites of activity in late G2/M and helps maintain the balance between pro- and anti-crossover pathways during homologous recombination. It is also involved in ubiquitin-mediated degradation of DNA repair proteins RAD52 and RAD57. Finally, the complex is recruited to distinct genomic hotspots of non-H2B protein ubiquitination (ub-hotspots) by the sumoylated transcription factor-like protein EUC1 where it ubiquitinates EUC1 and presumably other targets. The sequence is that of E3 ubiquitin-protein ligase complex SLX5-SLX8 subunit SLX8 (SLX8) from Saccharomyces cerevisiae (strain ATCC 204508 / S288c) (Baker's yeast).